Consider the following 261-residue polypeptide: MEIKEITIIGGYDKNGNPEPVREVTIKRGEIVGVVGPTGSGKSNLISDIEQLAQGDTISKRRILVNGEVPPIEMRRDPKKRRIAQLSQNMNFLADMTVEEFILMHAKSRGVYRENIVDEVIELANRLTGEPIKKDYNLTILSGGQSRSLMVADVAVISDSPIVLIDEIENAGIKKHEALELLAGYGKIVLVITHDPVLALMTDRRIVMRNGGMQKIIETTEEEKEISRKINEVDNWLLSLREKIRFGERLTHEDISLMVKG.

The 236-residue stretch at 1 to 236 (MEIKEITIIG…SRKINEVDNW (236 aa)) folds into the ABC transporter domain. 36–43 (GPTGSGKS) provides a ligand contact to ATP.

This sequence belongs to the ABC transporter superfamily.

This is an uncharacterized protein from Methanocaldococcus jannaschii (strain ATCC 43067 / DSM 2661 / JAL-1 / JCM 10045 / NBRC 100440) (Methanococcus jannaschii).